The sequence spans 554 residues: Hedycaryol synthase (554 aa).

(2E,6E)-farnesyl diphosphate contacts are provided by Arg270, Asp307, Asp311, Arg449, and Asp452. Mg(2+)-binding residues include Asp307 and Asp311. The DDXXD motif signature appears at 307–311 (DDTYD). Residues Asp452, Ser456, and Glu460 each contribute to the Mg(2+) site.

Belongs to the terpene synthase family. Requires Mg(2+) as cofactor. In terms of tissue distribution, specifically expressed in flowers.

It carries out the reaction (2E,6E)-farnesyl diphosphate + H2O = (2E,6E)-hedycaryol + diphosphate. The protein operates within secondary metabolite biosynthesis; terpenoid biosynthesis. Sesquiterpene synthase that catalyzes the formation of sesquiterpenes and sesquiterpenoid alcohols. Converts farnesyl diphosphate (FPP) to hedycaryol. Hedycaryol is likely to be one of the terpenes that attract insects for pollination of Camellia brevistyla. The sequence is that of Hedycaryol synthase from Camellia brevistyla.